The sequence spans 288 residues: Lipoyl synthase (288 aa).

Residues Cys-42, Cys-47, Cys-53, Cys-68, Cys-72, Cys-75, and Ser-280 each coordinate [4Fe-4S] cluster. The region spanning 54–269 (WGEGTATFMI…EKYGIELGFR (216 aa)) is the Radical SAM core domain.

Belongs to the radical SAM superfamily. Lipoyl synthase family. [4Fe-4S] cluster is required as a cofactor.

Its subcellular location is the cytoplasm. The catalysed reaction is [[Fe-S] cluster scaffold protein carrying a second [4Fe-4S](2+) cluster] + N(6)-octanoyl-L-lysyl-[protein] + 2 oxidized [2Fe-2S]-[ferredoxin] + 2 S-adenosyl-L-methionine + 4 H(+) = [[Fe-S] cluster scaffold protein] + N(6)-[(R)-dihydrolipoyl]-L-lysyl-[protein] + 4 Fe(3+) + 2 hydrogen sulfide + 2 5'-deoxyadenosine + 2 L-methionine + 2 reduced [2Fe-2S]-[ferredoxin]. Its pathway is protein modification; protein lipoylation via endogenous pathway; protein N(6)-(lipoyl)lysine from octanoyl-[acyl-carrier-protein]: step 2/2. Functionally, catalyzes the radical-mediated insertion of two sulfur atoms into the C-6 and C-8 positions of the octanoyl moiety bound to the lipoyl domains of lipoate-dependent enzymes, thereby converting the octanoylated domains into lipoylated derivatives. This Flavobacterium johnsoniae (strain ATCC 17061 / DSM 2064 / JCM 8514 / BCRC 14874 / CCUG 350202 / NBRC 14942 / NCIMB 11054 / UW101) (Cytophaga johnsonae) protein is Lipoyl synthase.